The chain runs to 215 residues: Ras-related protein Rab-14 (215 aa).

Alanine 2 carries the N-acetylalanine modification. Residues glycine 21, valine 22, glycine 23, lysine 24, serine 25, cysteine 26, alanine 38, aspartate 39, cysteine 40, histidine 42, and threonine 43 each coordinate GTP. Serine 25 contributes to the Mg(2+) binding site. A Switch 1 motif is present at residues 42–47 (HTIGVE). Mg(2+) is bound by residues threonine 43 and aspartate 66. A Switch 2 motif is present at residues 68–77 (AGQERFRAVT). GTP is bound by residues glycine 69, asparagine 124, lysine 125, aspartate 127, alanine 155, and lysine 156. Residues 188–215 (SGVQHKPSAPQGGRLTSEPQPQREGCGC) are disordered. S-geranylgeranyl cysteine attachment occurs at residues cysteine 213 and cysteine 215. Cysteine 215 is modified (cysteine methyl ester).

The protein belongs to the small GTPase superfamily. Rab family. In terms of assembly, interacts with ZFYVE20. Interacts with KIF16B. Interacts (GTP-bound form) with RUFY1; the interaction recruits RUFY1 onto endosomal membranes. Interacts (GTP-bound form) with RAB11FIP1 (via its C-terminus); the interactions doesn't mediate RAB11FIP1 rectruitment to membranes. Interacts with RAB11FIP2. Mg(2+) is required as a cofactor.

It is found in the recycling endosome. The protein resides in the early endosome membrane. It localises to the golgi apparatus membrane. The protein localises to the golgi apparatus. Its subcellular location is the trans-Golgi network membrane. It is found in the cytoplasmic vesicle. The protein resides in the phagosome. It catalyses the reaction GTP + H2O = GDP + phosphate + H(+). Its activity is regulated as follows. Regulated by guanine nucleotide exchange factors (GEFs) including DENND6A and DENND6B which promote the exchange of bound GDP for free GTP. Regulated by GTPase activating proteins (GAPs) which increase the GTP hydrolysis activity. Inhibited by GDP dissociation inhibitors (GDIs) which prevent Rab-GDP dissociation. In terms of biological role, the small GTPases Rab are key regulators of intracellular membrane trafficking, from the formation of transport vesicles to their fusion with membranes. Rabs cycle between an inactive GDP-bound form and an active GTP-bound form that is able to recruit to membranes different set of downstream effectors directly responsible for vesicle formation, movement, tethering and fusion. Involved in membrane trafficking between the Golgi complex and endosomes during early embryonic development. Regulates the Golgi to endosome transport of FGFR-containing vesicles during early development, a key process for developing basement membrane and epiblast and primitive endoderm lineages during early postimplantation development. May act by modulating the kinesin KIF16B-cargo association to endosomes. Regulates, together with its guanine nucleotide exchange factor DENND6A, the specific endocytic transport of ADAM10, N-cadherin/CDH2 shedding and cell-cell adhesion. Mediates endosomal tethering and fusion through the interaction with RUFY1 and RAB4B. Interaction with RAB11FIP1 may function in the process of neurite formation. This chain is Ras-related protein Rab-14 (RAB14), found in Sus scrofa (Pig).